A 60-amino-acid chain; its full sequence is Large ribosomal subunit protein uL30 (60 aa).

Belongs to the universal ribosomal protein uL30 family. In terms of assembly, part of the 50S ribosomal subunit.

In Idiomarina loihiensis (strain ATCC BAA-735 / DSM 15497 / L2-TR), this protein is Large ribosomal subunit protein uL30.